We begin with the raw amino-acid sequence, 275 residues long: Tryptophan synthase alpha chain (275 aa).

Residues glutamate 60 and aspartate 71 each act as proton acceptor in the active site.

It belongs to the TrpA family. Tetramer of two alpha and two beta chains.

It carries out the reaction (1S,2R)-1-C-(indol-3-yl)glycerol 3-phosphate + L-serine = D-glyceraldehyde 3-phosphate + L-tryptophan + H2O. The protein operates within amino-acid biosynthesis; L-tryptophan biosynthesis; L-tryptophan from chorismate: step 5/5. In terms of biological role, the alpha subunit is responsible for the aldol cleavage of indoleglycerol phosphate to indole and glyceraldehyde 3-phosphate. The polypeptide is Tryptophan synthase alpha chain (Prochlorococcus marinus (strain MIT 9313)).